The primary structure comprises 136 residues: Large ribosomal subunit protein uL16c (136 aa).

Basic residues predominate over residues 1–17 (MLSPKRVKFRKQHRGRM). The interval 1-25 (MLSPKRVKFRKQHRGRMKGISTRGN) is disordered.

The protein belongs to the universal ribosomal protein uL16 family. As to quaternary structure, part of the 50S ribosomal subunit.

It localises to the plastid. Its subcellular location is the chloroplast. The chain is Large ribosomal subunit protein uL16c from Anthoceros angustus (Hornwort).